An 814-amino-acid chain; its full sequence is Phosphatidylinositol 3-kinase VPS34 (814 aa).

The 153-residue stretch at 25-177 folds into the C2 PI3K-type domain; the sequence is LDGNLPVKKS…EKLMNKYERG (153 aa). One can recognise a PIK helical domain in the interval 274 to 449; it reads DRDLKPSNIE…YSTYELLEEN (176 aa). In terms of domain architecture, PI3K/PI4K catalytic spans 532–799; the sequence is VAGESSLFKS…LINESVSALF (268 aa). The interval 538–544 is G-loop; the sequence is LFKSALH. A catalytic loop region spans residues 668–676; sequence GIGDRHLDN. Residues 687 to 708 are activation loop; the sequence is HVDFAFILGRDPKPFPPPMKLC.

Belongs to the PI3/PI4-kinase family. Interacts with VPS15. Component of a complex made of VPS38/USL1 and PI3K main subunits such as VPS15, ATG6/VPS30 and VPS34. Binds directly to VPS38/USL1.

The catalysed reaction is a 1,2-diacyl-sn-glycero-3-phospho-(1D-myo-inositol) + ATP = a 1,2-diacyl-sn-glycero-3-phospho-(1D-myo-inositol-3-phosphate) + ADP + H(+). With respect to regulation, the PI3K inhibitor LY294002 affects phosphatidylinositol 3-phosphate (PI3P) levels and triggers a decrease in proline, hydrophobic and aromatic amino acids, and sugars (e.g. raffinose) accumulation in response to salt treatment correlated with lower P5CS1 expression and higher ProDH1 expression, genes involved in proline biosynthesis and catabolism, respectively. In terms of biological role, involved in the negative regulation of proline, hydrophobic and aromatic amino acids accumulation, especially in response to salt (NaCl), either through inhibition of their synthesis and/or promotion of their catabolism. Triggers defense responses (e.g. pathogenesis related (PR1 and PR5) gene expression and hydrogen peroxide H(2)O(2) burst) to the bacterial pathogen compatible Pseudomonas syringae pv tomato DC3000 (Pst DC3000) and incompatible Pst DC3000 (avrRpt2), by regulating reactive ogygen species (ROS) production and by promoting stomatal closure. The sequence is that of Phosphatidylinositol 3-kinase VPS34 from Arabidopsis thaliana (Mouse-ear cress).